Reading from the N-terminus, the 279-residue chain is Energy-coupling factor transporter ATP-binding protein EcfA (279 aa).

The ABC transporter domain maps to 4 to 239 (VETKDLYFRY…VETIRKANLR (236 aa)). 37–44 (GPNGAGKS) provides a ligand contact to ATP.

This sequence belongs to the ABC transporter superfamily. Energy-coupling factor EcfA family. In terms of assembly, forms a stable energy-coupling factor (ECF) transporter complex composed of 2 membrane-embedded substrate-binding proteins (S component), 2 ATP-binding proteins (A component) and 2 transmembrane proteins (T component).

The protein resides in the cell membrane. Its function is as follows. ATP-binding (A) component of a common energy-coupling factor (ECF) ABC-transporter complex. Unlike classic ABC transporters this ECF transporter provides the energy necessary to transport a number of different substrates. The sequence is that of Energy-coupling factor transporter ATP-binding protein EcfA from Methanocaldococcus jannaschii (strain ATCC 43067 / DSM 2661 / JAL-1 / JCM 10045 / NBRC 100440) (Methanococcus jannaschii).